Reading from the N-terminus, the 388-residue chain is MNCTLTDNTRAINVASNLGAPQQRTIFAKERISIPGYYEIIQFLGKGAYGTVCSVKFKGRSPAARIAVKKISNIFNKEILLKRAIRELKFMNFFKGHKNIVNLIDLEIVTSSPYDGLYCYQELIDYDLAKVIHSSVQLSEFHIKYFLYQILCGLKYIHSADVIHRDLKPGNILCTLNGCLKICDFGLARGIHAGFFKCHSTVQPHITNYVATRWYRAPELLLSNQPYSKSVDIWAVGCILAEFYARKPVFMGRDSMHQIFEIIKVLGTPDKDILIKFGTIKAWNLGKNSNNPVYKKIPWSNIFPFASHEAINLIESLLHWDSTHRLNVEQAISHPFLNEVRKPDDEPVCLQGPFDFTYESELNSMSKLRDYLVEEVKNFKTDLSSSSL.

Residues 38-337 (YEIIQFLGKG…VEQAISHPFL (300 aa)) enclose the Protein kinase domain. ATP contacts are provided by residues 44–52 (LGKGAYGTV) and Lys-69. The active-site Proton acceptor is Asp-166. Residues 207–209 (TNY) carry the TXY motif.

The protein belongs to the protein kinase superfamily. CMGC Ser/Thr protein kinase family. MAP kinase subfamily. Interacts with GSC2. The cofactor is Mg(2+). In terms of processing, dually phosphorylated on Thr-207 and Tyr-209, which activates the enzyme.

The enzyme catalyses L-seryl-[protein] + ATP = O-phospho-L-seryl-[protein] + ADP + H(+). It carries out the reaction L-threonyl-[protein] + ATP = O-phospho-L-threonyl-[protein] + ADP + H(+). With respect to regulation, activated by tyrosine and threonine phosphorylation. Required for spore wall assembly. Required for proper deposition of the two outer layers of the spore wall, the chitosan and dityrosine layers. Negatively regulates GSC2, an alternate catalytic subunit of the 1,3-beta-glucan synthase (GS). Participates in a developmentally regulated signal transduction pathway that coordinates cytodifferentiation events with the transcriptional program. This chain is Sporulation-specific mitogen-activated protein kinase SMK1 (SMK1), found in Saccharomyces cerevisiae (strain ATCC 204508 / S288c) (Baker's yeast).